The chain runs to 304 residues: Bifunctional phosphoglucose/phosphomannose isomerase (304 aa).

Residues 16–147 form the SIS domain; the sequence is FDKSFKVGKY…KPKIGDVDEA (132 aa). D-fructose 6-phosphate is bound by residues glycine 35, serine 36, serine 74, serine 76, threonine 79, and arginine 122. Residue glutamate 196 is the Proton acceptor of the active site. The D-fructose 6-phosphate site is built by histidine 212 and lysine 300. Residue histidine 212 is the Proton donor of the active site. Lysine 300 serves as the catalytic Proton acceptor.

This sequence belongs to the PGI/PMI family. Homodimer.

It carries out the reaction alpha-D-glucose 6-phosphate = beta-D-fructose 6-phosphate. The catalysed reaction is D-mannose 6-phosphate = D-fructose 6-phosphate. Dual specificity isomerase that catalyzes the isomerization of both glucose-6-phosphate and mannose-6-phosphate to fructose-6-phosphate. This Thermoplasma volcanium (strain ATCC 51530 / DSM 4299 / JCM 9571 / NBRC 15438 / GSS1) protein is Bifunctional phosphoglucose/phosphomannose isomerase.